The sequence spans 219 residues: Ribose-5-phosphate isomerase A (219 aa).

Substrate is bound by residues 28–31 (TGST), 81–84 (DGAD), and 94–97 (KGGG). The active-site Proton acceptor is the glutamate 103. Residue lysine 121 participates in substrate binding.

It belongs to the ribose 5-phosphate isomerase family. In terms of assembly, homodimer.

It catalyses the reaction aldehydo-D-ribose 5-phosphate = D-ribulose 5-phosphate. Its pathway is carbohydrate degradation; pentose phosphate pathway; D-ribose 5-phosphate from D-ribulose 5-phosphate (non-oxidative stage): step 1/1. In terms of biological role, catalyzes the reversible conversion of ribose-5-phosphate to ribulose 5-phosphate. The protein is Ribose-5-phosphate isomerase A of Erwinia tasmaniensis (strain DSM 17950 / CFBP 7177 / CIP 109463 / NCPPB 4357 / Et1/99).